A 351-amino-acid chain; its full sequence is Chorismate synthase (351 aa).

A disordered region spans residues 39 to 60 (EDIQRDLERRRPGKRLTSPRGE). NADP(+) contacts are provided by Arg-48 and Arg-53. Residues 124-126 (RSS), Ala-276, 291-295 (KPIPS), and Arg-317 contribute to the FMN site.

Belongs to the chorismate synthase family. In terms of assembly, homotetramer. The cofactor is FMNH2.

It catalyses the reaction 5-O-(1-carboxyvinyl)-3-phosphoshikimate = chorismate + phosphate. It participates in metabolic intermediate biosynthesis; chorismate biosynthesis; chorismate from D-erythrose 4-phosphate and phosphoenolpyruvate: step 7/7. Catalyzes the anti-1,4-elimination of the C-3 phosphate and the C-6 proR hydrogen from 5-enolpyruvylshikimate-3-phosphate (EPSP) to yield chorismate, which is the branch point compound that serves as the starting substrate for the three terminal pathways of aromatic amino acid biosynthesis. This reaction introduces a second double bond into the aromatic ring system. This Syntrophobacter fumaroxidans (strain DSM 10017 / MPOB) protein is Chorismate synthase.